Reading from the N-terminus, the 79-residue chain is RNA-binding protein Hfq (79 aa).

Residues 10 to 69 (DPFLNALRKEHVPVSIYLVNGIKLQGNIESFDQYVVLLRNTVTQMVYKHAISTVVPARAV) form the Sm domain.

It belongs to the Hfq family. Homohexamer.

Its function is as follows. RNA chaperone that binds small regulatory RNA (sRNAs) and mRNAs to facilitate mRNA translational regulation in response to envelope stress, environmental stress and changes in metabolite concentrations. Also binds with high specificity to tRNAs. This is RNA-binding protein Hfq from Ralstonia nicotianae (strain ATCC BAA-1114 / GMI1000) (Ralstonia solanacearum).